We begin with the raw amino-acid sequence, 429 residues long: UDP-N-acetylglucosamine 1-carboxyvinyltransferase 2 (429 aa).

Residue 22 to 23 participates in phosphoenolpyruvate binding; sequence KN. R93 lines the UDP-N-acetyl-alpha-D-glucosamine pocket. C117 serves as the catalytic Proton donor. Position 117 is a 2-(S-cysteinyl)pyruvic acid O-phosphothioketal (C117). UDP-N-acetyl-alpha-D-glucosamine is bound by residues 122-126, D305, and I327; that span reads RPIDQ.

It belongs to the EPSP synthase family. MurA subfamily.

It localises to the cytoplasm. It catalyses the reaction phosphoenolpyruvate + UDP-N-acetyl-alpha-D-glucosamine = UDP-N-acetyl-3-O-(1-carboxyvinyl)-alpha-D-glucosamine + phosphate. It participates in cell wall biogenesis; peptidoglycan biosynthesis. Its function is as follows. Cell wall formation. Adds enolpyruvyl to UDP-N-acetylglucosamine. This Bacillus anthracis protein is UDP-N-acetylglucosamine 1-carboxyvinyltransferase 2.